Here is a 278-residue protein sequence, read N- to C-terminus: Indole-3-glycerol phosphate synthase (278 aa).

It belongs to the TrpC family.

The catalysed reaction is 1-(2-carboxyphenylamino)-1-deoxy-D-ribulose 5-phosphate + H(+) = (1S,2R)-1-C-(indol-3-yl)glycerol 3-phosphate + CO2 + H2O. It functions in the pathway amino-acid biosynthesis; L-tryptophan biosynthesis; L-tryptophan from chorismate: step 4/5. The sequence is that of Indole-3-glycerol phosphate synthase from Pseudomonas aeruginosa (strain UCBPP-PA14).